Here is a 118-residue protein sequence, read N- to C-terminus: Small ribosomal subunit protein uS13 (118 aa).

The segment at 94–118 (SLPLRGQRTKTNARTRKGPRKPIRK) is disordered.

This sequence belongs to the universal ribosomal protein uS13 family. As to quaternary structure, part of the 30S ribosomal subunit. Forms a loose heterodimer with protein S19. Forms two bridges to the 50S subunit in the 70S ribosome.

Located at the top of the head of the 30S subunit, it contacts several helices of the 16S rRNA. In the 70S ribosome it contacts the 23S rRNA (bridge B1a) and protein L5 of the 50S subunit (bridge B1b), connecting the 2 subunits; these bridges are implicated in subunit movement. Contacts the tRNAs in the A and P-sites. This Shewanella halifaxensis (strain HAW-EB4) protein is Small ribosomal subunit protein uS13.